Consider the following 237-residue polypeptide: Sugar fermentation stimulation protein homolog (237 aa).

The protein belongs to the SfsA family.

This is Sugar fermentation stimulation protein homolog from Pseudomonas fluorescens (strain Pf0-1).